Reading from the N-terminus, the 56-residue chain is Small ribosomal subunit protein uS14 (56 aa).

Residues C21, C24, C39, and C42 each contribute to the Zn(2+) site.

The protein belongs to the universal ribosomal protein uS14 family. Zn(2+) is required as a cofactor.

The sequence is that of Small ribosomal subunit protein uS14 (RPS29) from Triticum aestivum (Wheat).